The primary structure comprises 369 residues: Anthranilate phosphoribosyltransferase (369 aa).

Residues Gly-111, 114–115 (GD), Thr-119, 121–124 (NIST), 139–147 (KHGNRGVSS), and Ser-151 contribute to the 5-phospho-alpha-D-ribose 1-diphosphate site. Anthranilate is bound at residue Gly-111. Residue Ser-123 participates in Mg(2+) binding. Asn-142 lines the anthranilate pocket. Arg-197 contributes to the anthranilate binding site. Residues Asp-256 and Glu-257 each coordinate Mg(2+).

Belongs to the anthranilate phosphoribosyltransferase family. Homodimer. Mg(2+) serves as cofactor.

The catalysed reaction is N-(5-phospho-beta-D-ribosyl)anthranilate + diphosphate = 5-phospho-alpha-D-ribose 1-diphosphate + anthranilate. It functions in the pathway amino-acid biosynthesis; L-tryptophan biosynthesis; L-tryptophan from chorismate: step 2/5. Functionally, catalyzes the transfer of the phosphoribosyl group of 5-phosphorylribose-1-pyrophosphate (PRPP) to anthranilate to yield N-(5'-phosphoribosyl)-anthranilate (PRA). This is Anthranilate phosphoribosyltransferase from Cupriavidus pinatubonensis (strain JMP 134 / LMG 1197) (Cupriavidus necator (strain JMP 134)).